The following is a 215-amino-acid chain: UPF0126 membrane protein DR_2368 (215 aa).

Transmembrane regions (helical) follow at residues 15–35, 39–59, 75–95, 101–121, 123–143, and 162–182; these read LHWLDLIGVLAFAMSGALLGV, FDLFGVLVLGAVTAVGGGAIR, TYLWTALLGALLAFAFGERLA, LSLFDSAGLALFATSGALGAI, IGLGPLGVVFAGMLSGVGGGI, and LYATAAAAGAGAVWLLAPHFT.

It belongs to the UPF0126 family.

It localises to the cell membrane. The chain is UPF0126 membrane protein DR_2368 from Deinococcus radiodurans (strain ATCC 13939 / DSM 20539 / JCM 16871 / CCUG 27074 / LMG 4051 / NBRC 15346 / NCIMB 9279 / VKM B-1422 / R1).